Reading from the N-terminus, the 464-residue chain is MNKGRVTQIMGPVVDVKFDGGKLPEIYNALRIKKDEVNLTLEVALHLGDDTVRTVAMSSTDGLVRGTEVEDTGRPISVPVGDATLGRVFNVLGEAIDLDGEIPADVRRDPIHRQAPAFEELSTKVEILETGIKVVDLLAPYIKGGKIGLFGGAGVGKTVLIQELINNIAQEHGGISVFAGVGERTREGNDLYHEMSDSGVIKKTAMVFGQMNEPPGARQRVALTGLTMAEHFRDEQGQDVLLFIDNIFRFTQAGSEVSALLGRMPSAVGYQPTLATEMGQLQERITSTNKGSITSIQAVYVPADDYTDPAPATTFAHLDATTNLERRLTQMGIYPAVDPLASTSRALSPEIVGEEHYEVARQVQQTLQRYKELQDIIAILGMDELSEEDKLVVHRARRIQFFLSQNFHVAEQFTGQPGSYVPVKETVRGFKEILEGKHDDLPEDAFRLVGGIEEVVENAKKMMA.

151–158 contacts ATP; it reads GGAGVGKT.

The protein belongs to the ATPase alpha/beta chains family. As to quaternary structure, F-type ATPases have 2 components, CF(1) - the catalytic core - and CF(0) - the membrane proton channel. CF(1) has five subunits: alpha(3), beta(3), gamma(1), delta(1), epsilon(1). CF(0) has three main subunits: a(1), b(2) and c(9-12). The alpha and beta chains form an alternating ring which encloses part of the gamma chain. CF(1) is attached to CF(0) by a central stalk formed by the gamma and epsilon chains, while a peripheral stalk is formed by the delta and b chains.

It is found in the cell membrane. The catalysed reaction is ATP + H2O + 4 H(+)(in) = ADP + phosphate + 5 H(+)(out). Functionally, produces ATP from ADP in the presence of a proton gradient across the membrane. The catalytic sites are hosted primarily by the beta subunits. The polypeptide is ATP synthase subunit beta (Bacillus cytotoxicus (strain DSM 22905 / CIP 110041 / 391-98 / NVH 391-98)).